We begin with the raw amino-acid sequence, 163 residues long: Nucleotide-binding protein Dvul_1191 (163 aa).

It belongs to the YajQ family.

Its function is as follows. Nucleotide-binding protein. In Nitratidesulfovibrio vulgaris (strain DP4) (Desulfovibrio vulgaris), this protein is Nucleotide-binding protein Dvul_1191.